Consider the following 499-residue polypeptide: Transcriptional regulator sdnM (499 aa).

It localises to the nucleus. It participates in antibiotic biosynthesis. Transcriptional regulator; part of the gene cluster that mediates the biosynthesis of sordarin and hypoxysordarin, glycoside antibiotics with a unique tetracyclic diterpene aglycone structure. First, the geranylgeranyl diphosphate synthase sdnC constructs GGDP from farnesyl diphosphate and isopentenyl diphosphate. The diterpene cyclase sdnA then catalyzes the cyclization of GGDP to afford cycloaraneosene. Cycloaraneosene is then hydroxylated four times by the putative cytochrome P450 monooxygenases sdnB, sdnE, sdnF and sdnH to give a hydroxylated cycloaraneosene derivative such as cycloaraneosene-8,9,13,19-tetraol. Although the order of the hydroxylations is unclear, at least C8, C9 and C13 of the cycloaraneosene skeleton are hydroxylated before the sordaricin formation. Dehydration of the 13-hydroxy group of the hydroxylated cycloaraneosene derivative might be catalyzed by an unassigned hypothetical protein such as sdnG and sdnP to construct the cyclopentadiene moiety. The FAD-dependent oxidoreductase sdnN is proposed to catalyze the oxidation at C9 of the hydroxylated cycloaraneosene derivative and also catalyze the Baeyer-Villiger oxidation to give the lactone intermediate. The presumed lactone intermediate would be hydrolyzed to give an acrolein moiety and a carboxylate moiety. Then, [4+2]cycloaddition would occur between the acrolein moiety and the cyclopentadiene moiety to give sordaricin. SdnN might also be involved in the [4+2]cycloaddition after the hypothesized oxidation to accommodate the oxidized product and prompt the [4+2]cycloaddition. GDP-6-deoxy-D-altrose may be biosynthesized from GDP-D-mannose by the putative GDP-mannose-4,6-dehydratase sdnI and the short-chain dehydrogenase sdnK. The glycosyltransferase sdnJ catalyzes the attachment of 6-deoxy-D-altrose onto the 19-hydroxy group of sordaricin to give 4'-O-demethylsordarin. The methyltransferase sdnD would complete the biosynthesis of sordarin. Sordarin can be further modified into hypoxysordarin. The unique acyl chain at the 3'-hydroxy group of hypoxysordarin would be constructed by an iterative type I PKS sdnO and the trans-acting polyketide methyltransferase sdnL. SdnL would be responsible for the introduction of an alpha-methyl group of the polyketide chain. Alternatively, the beta-lactamase-like protein sdnR might be responsible for the cleavage and transfer of the polyketide chain from the PKS sdnO to sordarin. Two putative cytochrome P450 monooxygenases, sdnQ and sdnT, might catalyze the epoxidations of the polyketide chain to complete the biosynthesis of hypoxysordarin. Transcriptional regulators sdnM and sdnS are presumably encoded for the transcriptional regulation of the expression of the sdn gene cluster. This Sordaria araneosa (Pleurage araneosa) protein is Transcriptional regulator sdnM.